The sequence spans 532 residues: Putative sodium-dependent excitatory amino acid transporter glt-3 (532 aa).

Residues Met1–Lys5 lie on the Cytoplasmic side of the membrane. Transmembrane regions (helical) follow at residues Asp6 to Ile26, Phe46 to Leu66, and Ile83 to Ile103. Topologically, residues His104 to Thr181 are extracellular. Asn164 and Asn169 each carry an N-linked (GlcNAc...) asparagine glycan. A run of 5 helical transmembrane segments spans residues Tyr182–Leu202, Ile222–Val242, Val264–Leu284, Ala352–Val372, and Ile383–Val402.

Belongs to the dicarboxylate/amino acid:cation symporter (DAACS) (TC 2.A.23) family.

The protein localises to the membrane. This chain is Putative sodium-dependent excitatory amino acid transporter glt-3 (glt-3), found in Caenorhabditis elegans.